Here is a 206-residue protein sequence, read N- to C-terminus: Small ribosomal subunit protein uS4 (206 aa).

The S4 RNA-binding domain maps to 98–158 (RRLDNVVFRL…EKSRSMELIK (61 aa)).

The protein belongs to the universal ribosomal protein uS4 family. As to quaternary structure, part of the 30S ribosomal subunit. Contacts protein S5. The interaction surface between S4 and S5 is involved in control of translational fidelity.

Its function is as follows. One of the primary rRNA binding proteins, it binds directly to 16S rRNA where it nucleates assembly of the body of the 30S subunit. With S5 and S12 plays an important role in translational accuracy. The sequence is that of Small ribosomal subunit protein uS4 from Thermoanaerobacter pseudethanolicus (strain ATCC 33223 / 39E) (Clostridium thermohydrosulfuricum).